The primary structure comprises 373 residues: G protein-coupled receptor 137Ba (373 aa).

Topologically, residues 1–15 (MQKDSLPTLSPAVPP) are lumenal. A helical transmembrane segment spans residues 16-36 (YVMLGLTVAYTIFYCLLFVFV). The Cytoplasmic segment spans residues 37 to 55 (YVQLWLVLRYRHKRFSYQT). Residues 56–76 (VFLFLCLLWAALRALLFSFYF) traverse the membrane as a helical segment. Residues 77-84 (KNCVTANT) are Lumenal-facing. A helical transmembrane segment spans residues 85-105 (LGPFCFWLLYCFPVCLQFFTL). Residues 106 to 135 (SLMNLYFAQVIFKAKSKYSPELQKYRLPLY) are Cytoplasmic-facing. The helical transmembrane segment at 136-156 (LLFLSISLLFLLVNLTCALLV) threads the bilayer. Residues 157–176 (KINRANTETVVLVRVTVNDS) lie on the Lumenal side of the membrane. Residues 177–197 (LFVLCAVSLSLCLYRIAKMSL) form a helical membrane-spanning segment. Residues 198 to 213 (ANIYLEAKGTSVCQVT) lie on the Cytoplasmic side of the membrane. Residues 214 to 234 (LIGVTVVLLYSSRACYNLVVL) traverse the membrane as a helical segment. Over 235-268 (ALTKIKSINSFDYDWYNVSDQADLKSTLGDAGYV) the chain is Lumenal. The chain crosses the membrane as a helical span at residues 269 to 289 (VFGVILFVWELLPTSLVVYFF). Residues 290-373 (RVRKPTLDRS…HLAPEELNPY (84 aa)) are Cytoplasmic-facing.

It belongs to the GPR137 family.

The protein resides in the lysosome membrane. In terms of biological role, lysosomal integral membrane protein that regulates the localization and activity of mTORC1, a signaling complex promoting cell growth in response to growth factors, energy levels, and amino acids. Interacts with Rag GTPases and increases the lysosomial localization and activity of Rag GTPases and thereby regulates mTORC1 translocation and activity in lysosome. Also acts as a negative regulator of osteoclast activity. May be involved in interleukin-4-induced M2 macrophage polarization. Also acts as a negative regulator of osteoclast activity. May be involved in interleukin-4-induced M2 macrophage polarization. The protein is G protein-coupled receptor 137Ba of Danio rerio (Zebrafish).